A 299-amino-acid polypeptide reads, in one-letter code: Probable lipid kinase YegS (299 aa).

Residues 2–133 (AEFPASLLIL…IDMAQVNKQT (132 aa)) enclose the DAGKc domain. ATP contacts are provided by residues Thr-40, 66-72 (GDGTINE), and Thr-95. 3 residues coordinate Mg(2+): Leu-215, Asp-218, and Leu-220. Glu-271 serves as the catalytic Proton acceptor.

This sequence belongs to the diacylglycerol/lipid kinase family. YegS lipid kinase subfamily. Mg(2+) is required as a cofactor. It depends on Ca(2+) as a cofactor.

The protein localises to the cytoplasm. Probably phosphorylates lipids; the in vivo substrate is unknown. This chain is Probable lipid kinase YegS, found in Escherichia coli O6:K15:H31 (strain 536 / UPEC).